The chain runs to 674 residues: Glutaminase kidney isoform, mitochondrial (674 aa).

The N-terminal 54 residues, 1 to 54 (MMRLRGSAMLRELLLRPPAAVGAVLRRAQPLGTLCRRPRGGSRPTAGLVAAARL), are a transit peptide targeting the mitochondrion. The tract at residues 56–123 (PWWGGGGRAK…PGETDAFGNS (68 aa)) is disordered. The segment covering 58 to 71 (WGGGGRAKGPGAGG) has biased composition (gly residues). The segment covering 89–101 (PPQQQQQQQQQPG) has biased composition (low complexity). N6-succinyllysine is present on residues K135 and K169. Position 291 (S291) interacts with substrate. K316 is modified (N6-acetyllysine). Residues 320 to 327 (GLRFNKLF) form a highly mobile activation loop region. Substrate is bound by residues N340, E386, N393, Y419, Y471, and V489. ANK repeat units follow at residues 590–619 (DSRT…VNPF) and 624–653 (WNNT…QYTP). A disordered region spans residues 652–674 (TPQGDSDDGKGNQTVHKNLDGLL). At S657 the chain carries Phosphoserine.

The protein belongs to the glutaminase family. In terms of assembly, homotetramer, dimer of dimers. The tetramers can assemble into rod-like oligomers (in vitro), but the physiological significance of this is not clear. Interacts with RAF1 and MAP2K2. Interacts with ATCAY; the interaction is direct and may control GLS localization, negatively regulating its activity. Post-translationally, synthesized as a 74-kDa cytosolic precursor which is proteolytically processed by the mitochondrial-processing peptidase (MPP) via a 72-kDa intermediate to yield the mature mitochondrial 68- and 65-kDa subunits.

Its subcellular location is the mitochondrion. It is found in the cytoplasm. It localises to the cytosol. The protein resides in the mitochondrion matrix. It carries out the reaction L-glutamine + H2O = L-glutamate + NH4(+). With respect to regulation, isoform 1 and isoform 2 are activated by phosphate, due to increased affinity for glutamine. At phosphate concentrations above 10 mM, isoform 2 is more efficient than isoform 1. Its function is as follows. Catalyzes the first reaction in the primary pathway for the renal catabolism of glutamine. Plays a role in maintaining acid-base homeostasis. Regulates the levels of the neurotransmitter glutamate, the main excitatory neurotransmitter in the brain. This is Glutaminase kidney isoform, mitochondrial (Gls) from Mus musculus (Mouse).